A 119-amino-acid chain; its full sequence is Protein Wnt-4 (119 aa).

A lipid anchor (O-palmitoleoyl serine; by PORCN) is attached at Ser-1. 2 disulfides stabilise this stretch: Cys-69–Cys-100 and Cys-85–Cys-95. An N-linked (GlcNAc...) asparagine glycan is attached at Asn-86.

This sequence belongs to the Wnt family. In terms of processing, palmitoleoylation is required for efficient binding to frizzled receptors. Depalmitoleoylation leads to Wnt signaling pathway inhibition.

It localises to the secreted. Its subcellular location is the extracellular space. The protein resides in the extracellular matrix. In terms of biological role, ligand for members of the frizzled family of seven transmembrane receptors. Plays an important role in embryonic development. The polypeptide is Protein Wnt-4 (WNT-4) (Eptatretus stoutii (Pacific hagfish)).